A 355-amino-acid chain; its full sequence is Transcription factor TCP13 (355 aa).

A disordered region spans residues 1 to 57; it reads MNIVSWKDANDEVAGGATTRREREVKEDQEETEVRATSGKTVIKKQPTSISSSSSSW. Residues 74–132 enclose the TCP domain; it reads GKDRHSKVCTLRGLRDRRVRLSVPTAIQLYDLQERLGVDQPSKAVDWLLDAAKEEIDEL. Positions 329–355 are disordered; it reads TNSTTTANMSRHLGSERCTSRGSDHHM. A compositionally biased stretch (basic and acidic residues) spans 341–355; it reads LGSERCTSRGSDHHM.

Interacts with AHL27 and AHL29. Interacts with SPL. Interacts with KIN10; KIN11 and FLZ3. As to expression, expressed in cotyledons, particularly in the vascular region, in leaves, buds, flowers and immature siliques, and, to a lower extent, in roots.

Its subcellular location is the nucleus. It localises to the plastid. It is found in the chloroplast. Plays a pivotal role in the control of morphogenesis of shoot organs by negatively regulating the expression of boundary-specific genes such as CUC genes, probably through the induction of miRNA (e.g. miR164). Binds to the 3'-ACC-5' repeats in the light-responsive promoter (LRP) of psbD, and activates its transcription. Participates in ovule development. The protein is Transcription factor TCP13 (TCP13) of Arabidopsis thaliana (Mouse-ear cress).